Reading from the N-terminus, the 305-residue chain is tRNA dimethylallyltransferase (305 aa).

Position 13-20 (13-20 (GPTSSGKT)) interacts with ATP. 15–20 (TSSGKT) lines the substrate pocket. The tract at residues 39-42 (DSKQ) is interaction with substrate tRNA.

Belongs to the IPP transferase family. In terms of assembly, monomer. It depends on Mg(2+) as a cofactor.

The catalysed reaction is adenosine(37) in tRNA + dimethylallyl diphosphate = N(6)-dimethylallyladenosine(37) in tRNA + diphosphate. In terms of biological role, catalyzes the transfer of a dimethylallyl group onto the adenine at position 37 in tRNAs that read codons beginning with uridine, leading to the formation of N6-(dimethylallyl)adenosine (i(6)A). The chain is tRNA dimethylallyltransferase from Neorickettsia sennetsu (strain ATCC VR-367 / Miyayama) (Ehrlichia sennetsu).